The following is a 399-amino-acid chain: Homocysteine-responsive endoplasmic reticulum-resident ubiquitin-like domain member 2 protein (399 aa).

The Ubiquitin-like domain maps to 10–89; the sequence is VTLVIKAPNQ…HMVHLVCASR (80 aa). 2 disordered regions span residues 88-144 and 211-250; these read SRTP…SIRH and ASNQSPSNGENAQPVPRPVINSESPPPNPPRAPPNVAPEM. Residues 95-106 are compositionally biased toward polar residues; the sequence is PKASTSNKSMGT. Over residues 107–124 the composition is skewed to low complexity; that stretch reads ASISRSSSEHSGSASPAS. The span at 211–221 shows a compositional bias: polar residues; that stretch reads ASNQSPSNGEN. Positions 234 to 246 are enriched in pro residues; sequence SPPPNPPRAPPNV. Residues 299–319 traverse the membrane as a helical segment; sequence FVMVMGAMILVYMHQAGWFPL.

It localises to the membrane. In terms of biological role, could be involved in the unfolded protein response (UPR) pathway. This is Homocysteine-responsive endoplasmic reticulum-resident ubiquitin-like domain member 2 protein (herpud2) from Xenopus tropicalis (Western clawed frog).